The following is a 562-amino-acid chain: NAD-dependent malic enzyme (562 aa).

The active-site Proton donor is the Y101. R154 is an NAD(+) binding site. K172 (proton acceptor) is an active-site residue. Residues E243, D244, and D267 each coordinate a divalent metal cation. NAD(+) is bound by residues D267 and N415.

It belongs to the malic enzymes family. Homotetramer. Requires Mg(2+) as cofactor. Mn(2+) serves as cofactor.

The catalysed reaction is (S)-malate + NAD(+) = pyruvate + CO2 + NADH. The enzyme catalyses oxaloacetate + H(+) = pyruvate + CO2. This Shewanella baltica (strain OS155 / ATCC BAA-1091) protein is NAD-dependent malic enzyme.